The sequence spans 78 residues: Large ribosomal subunit protein eL38 (78 aa).

Belongs to the eukaryotic ribosomal protein eL38 family. As to quaternary structure, component of the large ribosomal subunit. Mature ribosomes consist of a small (40S) and a large (60S) subunit. The 40S subunit contains about 32 different proteins and 1 molecule of RNA (18S). The 60S subunit contains 45 different proteins and 3 molecules of RNA (25S, 5.8S and 5S).

It is found in the cytoplasm. Component of the ribosome, a large ribonucleoprotein complex responsible for the synthesis of proteins in the cell. The small ribosomal subunit (SSU) binds messenger RNAs (mRNAs) and translates the encoded message by selecting cognate aminoacyl-transfer RNA (tRNA) molecules. The large subunit (LSU) contains the ribosomal catalytic site termed the peptidyl transferase center (PTC), which catalyzes the formation of peptide bonds, thereby polymerizing the amino acids delivered by tRNAs into a polypeptide chain. The nascent polypeptides leave the ribosome through a tunnel in the LSU and interact with protein factors that function in enzymatic processing, targeting, and the membrane insertion of nascent chains at the exit of the ribosomal tunnel. The protein is Large ribosomal subunit protein eL38 of Candida albicans (strain SC5314 / ATCC MYA-2876) (Yeast).